The chain runs to 75 residues: MKADIHPDYHEINIIMTDGTEYKTRSCYGKPGDTLRLDIDPKSHPAWTGQQRVLDTGGQVAKFNKRFAGIGARKK.

This sequence belongs to the bacterial ribosomal protein bL31 family. Type A subfamily. In terms of assembly, part of the 50S ribosomal subunit.

Functionally, binds the 23S rRNA. The sequence is that of Large ribosomal subunit protein bL31 from Acidiphilium cryptum (strain JF-5).